The following is a 298-amino-acid chain: Tyrosine recombinase XerC (298 aa).

Residues 2-88 (TDLHTDVERY…ALRSFFDWLV (87 aa)) form the Core-binding (CB) domain. The 180-residue stretch at 109-288 (HLPKNIDVDD…DFQHLASVYD (180 aa)) folds into the Tyr recombinase domain. Active-site residues include R148, K172, H240, R243, and H266. The active-site O-(3'-phospho-DNA)-tyrosine intermediate is the Y275.

This sequence belongs to the 'phage' integrase family. XerC subfamily. As to quaternary structure, forms a cyclic heterotetrameric complex composed of two molecules of XerC and two molecules of XerD, in which XerC interacts with XerD via its C-terminal region, XerD interacts with XerC via its C-terminal region and so on.

It localises to the cytoplasm. FtsK may regulate the catalytic switch between XerC and XerD in the heterotetrameric complex during the two steps of the recombination process. Site-specific tyrosine recombinase, which acts by catalyzing the cutting and rejoining of the recombining DNA molecules. Binds cooperatively to specific DNA consensus sequences that are separated from XerD binding sites by a short central region, forming the heterotetrameric XerC-XerD complex that recombines DNA substrates. The complex is essential to convert dimers of the bacterial chromosome into monomers to permit their segregation at cell division. It also contributes to the segregational stability of plasmids. In the complex XerC specifically exchanges the top DNA strands. This is Tyrosine recombinase XerC from Escherichia coli O45:K1 (strain S88 / ExPEC).